The chain runs to 266 residues: Undecaprenyl-diphosphatase (266 aa).

Transmembrane regions (helical) follow at residues isoleucine 2 to isoleucine 22, leucine 39 to tyrosine 59, leucine 86 to isoleucine 106, methionine 112 to leucine 132, isoleucine 145 to serine 165, alanine 184 to tyrosine 204, methionine 212 to isoleucine 232, and leucine 246 to isoleucine 266.

Belongs to the UppP family.

The protein localises to the cell inner membrane. It carries out the reaction di-trans,octa-cis-undecaprenyl diphosphate + H2O = di-trans,octa-cis-undecaprenyl phosphate + phosphate + H(+). Functionally, catalyzes the dephosphorylation of undecaprenyl diphosphate (UPP). Confers resistance to bacitracin. This Borrelia garinii subsp. bavariensis (strain ATCC BAA-2496 / DSM 23469 / PBi) (Borreliella bavariensis) protein is Undecaprenyl-diphosphatase.